Reading from the N-terminus, the 207-residue chain is Probable HTH-type transcriptional regulator YttP (207 aa).

One can recognise an HTH tetR-type domain in the interval 3 to 63 (VSTKDKIIES…HLVSEFYEGY (61 aa)). The segment at residues 26-45 (SVREIAKSADVNVAHISYYF) is a DNA-binding region (H-T-H motif).

This chain is Probable HTH-type transcriptional regulator YttP (yttP), found in Bacillus subtilis (strain 168).